Here is a 324-residue protein sequence, read N- to C-terminus: Lipoyl synthase, chloroplastic (324 aa).

2 stretches are compositionally biased toward low complexity: residues 1-12 (MCGPTATTVANA) and 20-29 (KGLPPGLKKP). The interval 1–30 (MCGPTATTVANAGTGGETIKGLPPGLKKPP) is disordered. C58, C63, C69, C86, C90, C93, and S302 together coordinate [4Fe-4S] cluster. The Radical SAM core domain maps to 72-291 (GDTGTATVML…AYGEEVIGFR (220 aa)).

It belongs to the radical SAM superfamily. Lipoyl synthase family. [4Fe-4S] cluster serves as cofactor.

It localises to the plastid. Its subcellular location is the chloroplast. It catalyses the reaction [[Fe-S] cluster scaffold protein carrying a second [4Fe-4S](2+) cluster] + N(6)-octanoyl-L-lysyl-[protein] + 2 oxidized [2Fe-2S]-[ferredoxin] + 2 S-adenosyl-L-methionine + 4 H(+) = [[Fe-S] cluster scaffold protein] + N(6)-[(R)-dihydrolipoyl]-L-lysyl-[protein] + 4 Fe(3+) + 2 hydrogen sulfide + 2 5'-deoxyadenosine + 2 L-methionine + 2 reduced [2Fe-2S]-[ferredoxin]. It functions in the pathway protein modification; protein lipoylation via endogenous pathway; protein N(6)-(lipoyl)lysine from octanoyl-[acyl-carrier-protein]: step 2/2. In terms of biological role, catalyzes the radical-mediated insertion of two sulfur atoms into the C-6 and C-8 positions of the octanoyl moiety bound to the lipoyl domains of lipoate-dependent enzymes, thereby converting the octanoylated domains into lipoylated derivatives. The polypeptide is Lipoyl synthase, chloroplastic (Ostreococcus lucimarinus (strain CCE9901)).